Consider the following 1363-residue polypeptide: Spike glycoprotein (1363 aa).

Positions 1-13 (MFLILLISLPMAL) are cleaved as a signal peptide. Residues 14-1307 (AVIGDLKCTT…GTYEYYVKWP (1294 aa)) lie on the Extracellular side of the membrane. Positions 15 to 298 (VIGDLKCTTV…DFMSEIKCKT (284 aa)) constitute a BetaCoV S1-NTD domain. Cystine bridges form between cysteine 21-cysteine 165, cysteine 160-cysteine 193, cysteine 172-cysteine 252, cysteine 286-cysteine 296, and cysteine 331-cysteine 356. N-linked (GlcNAc...) asparagine; by host glycosylation is found at asparagine 59 and asparagine 133. N-linked (GlcNAc...) asparagine; by host glycosylation is present at asparagine 198. In terms of domain architecture, BetaCoV S1-CTD spans 329 to 617 (PDCNIEAWLN…DVNSGTTCST (289 aa)). Residue asparagine 359 is glycosylated (N-linked (GlcNAc...) asparagine; by host). 2 disulfides stabilise this stretch: cysteine 374–cysteine 427 and cysteine 386–cysteine 615. Residues asparagine 437, asparagine 649, asparagine 676, asparagine 696, asparagine 714, asparagine 739, and asparagine 788 are each glycosylated (N-linked (GlcNAc...) asparagine; by host). Fusion peptide stretches follow at residues 914–935 (SAIE…VEAY) and 933–953 (EAYN…VQSY). Residue asparagine 937 is glycosylated (N-linked (GlcNAc...) asparagine; by host). A disulfide bridge links cysteine 938 with cysteine 949. The interval 1014 to 1064 (QKLIANAFNNALDAIQEGFDATNSALVKIQAVVNANAEALNNLLQQLSNRF) is heptad repeat 1. A coiled-coil region spans residues 1043–1087 (QAVVNANAEALNNLLQQLSNRFGAISSSLQEILSRLDALEAQRQI). N-linked (GlcNAc...) asparagine; by host glycosylation is found at asparagine 1194, asparagine 1224, asparagine 1234, asparagine 1253, asparagine 1267, and asparagine 1288. Residues 1258–1296 (APDLSLDYINVTFLDLQDEMNRLQEAIKLLNQSYINLKD) form a heptad repeat 2 region. A coiled-coil region spans residues 1269 to 1297 (TFLDLQDEMNRLQEAIKLLNQSYINLKDI). Residues 1308 to 1328 (WYVWLLIGFAGVAMLVLLFFI) traverse the membrane as a helical segment. Topologically, residues 1329-1363 (CCCTGCGTSCFKKCGGCCDDYTGHQELVIKTSHDD) are cytoplasmic. The KxHxx motif lies at 1359–1363 (TSHDD).

This sequence belongs to the betacoronaviruses spike protein family. As to quaternary structure, homotrimer; each monomer consists of a S1 and a S2 subunit. The resulting peplomers protrude from the virus surface as spikes. Post-translationally, specific enzymatic cleavages in vivo yield mature proteins. The precursor is processed into S1 and S2 by host cell furin or another cellular protease to yield the mature S1 and S2 proteins. Additionally, a second cleavage leads to the release of a fusion peptide after viral attachment to host cell receptor. The cytoplasmic Cys-rich domain is palmitoylated. Spike glycoprotein is digested within host endosomes.

It localises to the virion membrane. The protein localises to the host endoplasmic reticulum-Golgi intermediate compartment membrane. The protein resides in the host cell membrane. Attaches the virion to the cell membrane by interacting with host receptor, initiating the infection. Its function is as follows. Mediates fusion of the virion and cellular membranes by acting as a class I viral fusion protein. Under the current model, the protein has at least three conformational states: pre-fusion native state, pre-hairpin intermediate state, and post-fusion hairpin state. During viral and target cell membrane fusion, the coiled coil regions (heptad repeats) assume a trimer-of-hairpins structure, positioning the fusion peptide in close proximity to the C-terminal region of the ectodomain. The formation of this structure appears to drive apposition and subsequent fusion of viral and target cell membranes. Functionally, acts as a viral fusion peptide which is unmasked following S2 cleavage occurring upon virus endocytosis. This Bos taurus (Bovine) protein is Spike glycoprotein.